The chain runs to 710 residues: Polyribonucleotide nucleotidyltransferase (710 aa).

2 residues coordinate Mg(2+): Asp489 and Asp495. Residues 556 to 615 (PKIDTIKIDVDKIKVVIGKGGETIDKIIAETGVKIDIDDEGNVSIYSSDQAAIDRTKEII) form the KH domain. Residues 625-693 (GEVYHAKVIR…EKGRVDASMK (69 aa)) enclose the S1 motif domain. The segment at 691–710 (SMKALIPRPPKPEKKEEKHD) is disordered. Basic and acidic residues predominate over residues 700 to 710 (PKPEKKEEKHD).

The protein belongs to the polyribonucleotide nucleotidyltransferase family. It depends on Mg(2+) as a cofactor.

The protein localises to the cytoplasm. It catalyses the reaction RNA(n+1) + phosphate = RNA(n) + a ribonucleoside 5'-diphosphate. Its function is as follows. Involved in mRNA degradation. Catalyzes the phosphorolysis of single-stranded polyribonucleotides processively in the 3'- to 5'-direction. The sequence is that of Polyribonucleotide nucleotidyltransferase from Streptococcus pyogenes serotype M18 (strain MGAS8232).